The following is a 294-amino-acid chain: MTRQDASTPAPSGARIIDGAALAQRIREDVARRVQALAAKGVRPGLAVVLVGDDPASQVYVRNKVAACEKAGLYSIKEQYPADMTEAELLARIDTLNRDPAIHGILVQLPLPPHMSSHKVIEAIAAEKDVDGFHISNAGLLMTGQPLFRPCTPYGVMKMLEAEGVPLRGAEAVIVGASNIVGKPMAMLLLQAGATITICNSKTRDLAAQTRRADVLVVATGKPGMIDGSMIKPGAVVIDVGINRGADGKLCGDVDFASAREVAGAITPVPGGVGPMTIAMLLVNTVEAAERTAG.

Residues 176–178 (GAS), serine 201, and isoleucine 242 each bind NADP(+).

Belongs to the tetrahydrofolate dehydrogenase/cyclohydrolase family. As to quaternary structure, homodimer.

The catalysed reaction is (6R)-5,10-methylene-5,6,7,8-tetrahydrofolate + NADP(+) = (6R)-5,10-methenyltetrahydrofolate + NADPH. It carries out the reaction (6R)-5,10-methenyltetrahydrofolate + H2O = (6R)-10-formyltetrahydrofolate + H(+). Its pathway is one-carbon metabolism; tetrahydrofolate interconversion. Functionally, catalyzes the oxidation of 5,10-methylenetetrahydrofolate to 5,10-methenyltetrahydrofolate and then the hydrolysis of 5,10-methenyltetrahydrofolate to 10-formyltetrahydrofolate. The protein is Bifunctional protein FolD of Bordetella petrii (strain ATCC BAA-461 / DSM 12804 / CCUG 43448).